Consider the following 324-residue polypeptide: Phospho-N-acetylmuramoyl-pentapeptide-transferase (324 aa).

The next 10 helical transmembrane spans lie at 9–29, 53–73, 77–97, 117–137, 147–167, 176–196, 201–221, 227–247, 253–273, and 304–324; these read TFAVAFIITVIGVPLFIPFLV, TMGAVVFITAMLISFLVFSFI, VSAATWLLFIALALFGALGFL, FLGQVVISILFYLVYHFNDFA, IEVDLGWFFVIFILFWLVGFS, LDGLVSGLSVIAFSAFGVIAF, MDVAIFCFAIVGGMLGFLLFN, IFMGDTGSLALGGSIAAISIL, LLLLIGIIFVIETASVILQVF, and VLTFWGIGLVGAIISVCVVIF.

Belongs to the glycosyltransferase 4 family. MraY subfamily. The cofactor is Mg(2+).

Its subcellular location is the cell membrane. The catalysed reaction is UDP-N-acetyl-alpha-D-muramoyl-L-alanyl-gamma-D-glutamyl-meso-2,6-diaminopimeloyl-D-alanyl-D-alanine + di-trans,octa-cis-undecaprenyl phosphate = di-trans,octa-cis-undecaprenyl diphospho-N-acetyl-alpha-D-muramoyl-L-alanyl-D-glutamyl-meso-2,6-diaminopimeloyl-D-alanyl-D-alanine + UMP. It functions in the pathway cell wall biogenesis; peptidoglycan biosynthesis. In terms of biological role, catalyzes the initial step of the lipid cycle reactions in the biosynthesis of the cell wall peptidoglycan: transfers peptidoglycan precursor phospho-MurNAc-pentapeptide from UDP-MurNAc-pentapeptide onto the lipid carrier undecaprenyl phosphate, yielding undecaprenyl-pyrophosphoryl-MurNAc-pentapeptide, known as lipid I. The sequence is that of Phospho-N-acetylmuramoyl-pentapeptide-transferase from Listeria monocytogenes serovar 1/2a (strain ATCC BAA-679 / EGD-e).